A 145-amino-acid chain; its full sequence is 3-hydroxyacyl-[acyl-carrier-protein] dehydratase FabZ (145 aa).

H47 is a catalytic residue.

Belongs to the thioester dehydratase family. FabZ subfamily.

Its subcellular location is the cytoplasm. The catalysed reaction is a (3R)-hydroxyacyl-[ACP] = a (2E)-enoyl-[ACP] + H2O. Involved in unsaturated fatty acids biosynthesis. Catalyzes the dehydration of short chain beta-hydroxyacyl-ACPs and long chain saturated and unsaturated beta-hydroxyacyl-ACPs. In Thiobacillus denitrificans (strain ATCC 25259 / T1), this protein is 3-hydroxyacyl-[acyl-carrier-protein] dehydratase FabZ.